The following is a 754-amino-acid chain: Deadenylation-dependent mRNA-decapping factor pdc2 (754 aa).

The interaction with lsm1 stretch occupies residues 499–754; it reads LESIWKALYI…MGLDARQLSA (256 aa).

The protein belongs to the PAT1 family. As to quaternary structure, interacts with dcp2. Interacts with lsm1; via C-terminus.

The protein resides in the cytoplasm. It localises to the nucleus. The protein localises to the P-body. Activator of decapping that functions as a general and active mechanism of translational repression and required for P-body formation. Stabilizes the 3' terminus of mRNAs and modulates the rates of mRNA-decapping that occur following deadenylation. Might be required for promoting the formation or the stabilization of the preinitiation translation complexes. Necessary for accurate chromosome transmission during cell division. Together with lsm1, recruits the deadenylase ccr4 to P-bodies. The sequence is that of Deadenylation-dependent mRNA-decapping factor pdc2 from Schizosaccharomyces pombe (strain 972 / ATCC 24843) (Fission yeast).